Reading from the N-terminus, the 977-residue chain is Collagen alpha-2(I) chain (977 aa).

The interval 1 to 977 (SGGFDFSFLP…RGSQGSQGPS (977 aa)) is disordered. 4 positions are modified to 4-hydroxyproline: P10, P13, P28, and P34. Over residues 17-66 (GPMGLMGPRGPPGASGAPGPQGFQGPAGEPGEPGQTGPAGARGPAGPPGK) the composition is skewed to low complexity. The residue at position 91 (K91) is a 5-hydroxylysine; alternate. K91 is a glycosylation site (O-linked (Gal...) hydroxylysine; alternate). Composition is skewed to low complexity over residues 138-159 (SRGS…SAGP) and 205-226 (PGAN…AGAP). Over residues 258–267 (GESGGKGEPG) the composition is skewed to gly residues. Low complexity predominate over residues 268–278 (SAGPQGPPGSS). A compositionally biased stretch (gly residues) spans 300–309 (GLRGGPGSRG). A compositionally biased stretch (low complexity) spans 322–338 (PAGARGASGPAGVRGPS). A 4-hydroxyproline mark is found at P344 and P347. Residues 373–392 (LPGIDGRPGPIGPAGARGEA) are compositionally biased toward low complexity. Residues 441-450 (GVQGGKGEQG) are compositionally biased toward gly residues. Low complexity-rich tracts occupy residues 497–514 (SGES…SRGP) and 526–536 (EPGVVGAPGTA). Gly residues predominate over residues 537–546 (GPAGSGGLPG). 2 stretches are compositionally biased toward low complexity: residues 569–605 (VGTT…AGPA) and 620–640 (VGPA…QPGA). Residues 641–650 (KGERGTKGPK) are compositionally biased toward basic and acidic residues. Residues 658–668 (PTGPVGSAGPA) show a composition bias toward low complexity. The segment covering 678 to 687 (GSRGDGGPPG) has biased composition (gly residues). A compositionally biased stretch (low complexity) spans 689 to 698 (TGFPGAAGRT). The span at 735-744 (GETGAGGPPG) shows a compositional bias: gly residues. Low complexity-rich tracts occupy residues 752–779 (SGEP…LGLP) and 787–797 (LPGVAGAVGEP). The span at 798-817 (GPLGIGPPGARGPSGAGVNG) shows a compositional bias: gly residues. 2 stretches are compositionally biased toward low complexity: residues 853–871 (PVGA…PAGK) and 878–898 (PGPA…PSGP). Basic and acidic residues predominate over residues 902–913 (RGDKGEAGDKGP).

Belongs to the fibrillar collagen family. In terms of assembly, trimers of one alpha 2(I) and two alpha 1(I) chains. Interacts (via C-terminus) with TMEM131 (via PapD-L domain); the interaction is direct and is involved in assembly and TRAPPIII ER-to-Golgi transport complex-dependent secretion of collagen. In terms of processing, prolines at the third position of the tripeptide repeating unit (G-X-Y) are hydroxylated in some or all of the chains. Expressed in bones.

The protein localises to the secreted. It localises to the extracellular space. Its subcellular location is the extracellular matrix. In terms of biological role, type I collagen is a member of group I collagen (fibrillar forming collagen). This is Collagen alpha-2(I) chain from Scelidodon sp. (strain SLP-2019) (South American ground sloth).